Consider the following 1088-residue polypeptide: RNA-directed RNA polymerase (1088 aa).

Residues 501 to 687 (LSYGDVTRFL…AKRYIAGGKI (187 aa)) enclose the RdRp catalytic domain.

This sequence belongs to the reoviridae RNA-directed RNA polymerase family. In terms of assembly, interacts with VP3 (Potential). Interacts with VP2; this interaction activates VP1. Interacts with NSP5; this interaction is probably necessary for the formation of functional virus factories. Interacts with NSP2; this interaction is weak. The cofactor is Mg(2+).

It is found in the virion. The enzyme catalyses RNA(n) + a ribonucleoside 5'-triphosphate = RNA(n+1) + diphosphate. Its function is as follows. RNA-directed RNA polymerase that is involved in both transcription and genome replication. Together with VP3 capping enzyme, forms an enzyme complex positioned near the channels situated at each of the five-fold vertices of the core. Following infection, the outermost layer of the virus is lost, leaving a double-layered particle (DLP) made up of the core and VP6 shell. VP1 then catalyzes the transcription of fully conservative plus-strand genomic RNAs that are extruded through the DLP's channels into the cytoplasm where they function as mRNAs for translation of viral proteins. One copy of each of the viral (+)RNAs is also recruited during core assembly, together with newly synthesized polymerase complexes and VP2. The polymerase of these novo-formed particles catalyzes the synthesis of complementary minus-strands leading to dsRNA formation. To do so, the polymerase specifically recognizes and binds 4 bases 5'-UGUG-3' in the conserved 3'-sequence of plus-strand RNA templates. VP2 presumably activates the autoinhibited VP1-RNA complex to coordinate packaging and genome replication. Once dsRNA synthesis is complete, the polymerase switches to the transcriptional mode, thus providing secondary transcription. The protein is RNA-directed RNA polymerase of Homo sapiens (Human).